The following is a 150-amino-acid chain: Flagellar assembly factor FliW (150 aa).

The protein belongs to the FliW family. Interacts with translational regulator CsrA and flagellin(s).

The protein resides in the cytoplasm. Acts as an anti-CsrA protein, binds CsrA and prevents it from repressing translation of its target genes, one of which is flagellin. Binds to flagellin and participates in the assembly of the flagellum. The protein is Flagellar assembly factor FliW of Leptospira interrogans serogroup Icterohaemorrhagiae serovar Lai (strain 56601).